A 373-amino-acid polypeptide reads, in one-letter code: Alcohol dehydrogenase 2 (373 aa).

Zn(2+) contacts are provided by C47, T49, H69, C99, C102, C105, C113, and C177. The an alcohol site is built by T49 and H69. T49 is a binding site for NAD(+). Residues 202–207 (GLGAVG), D226, K231, T272, F316, and R366 each bind NAD(+).

This sequence belongs to the zinc-containing alcohol dehydrogenase family. In terms of assembly, homodimer. The cofactor is Zn(2+).

It is found in the cytoplasm. The catalysed reaction is a primary alcohol + NAD(+) = an aldehyde + NADH + H(+). It catalyses the reaction a secondary alcohol + NAD(+) = a ketone + NADH + H(+). This chain is Alcohol dehydrogenase 2 (ADH2), found in Hordeum vulgare (Barley).